Consider the following 252-residue polypeptide: MKTVTVRDLVVGEGAPKIIVSLMGKTITDVKSEALAYREADFDILEWRVDHFANVTTAESVLEAAGAIQEIITDKPLLFTFRSAKEGGEQALTTGQYIALNRAAVDSGLVDMIDLELFTGDDEVKATVGYAHQHNVAVIMSNHDFHKTPAAEEIVQRLRKMQELGADIPKIAVMPQTKADVLTLLTATVEMQERYADRPIITMSMSKTGVISRLAGEVFGSAATFGAVKKASAPGQISVADLRTVLTILHQA.

Residues S21, 46 to 48 (EWR), and R82 each bind 3-dehydroquinate. H143 functions as the Proton donor/acceptor in the catalytic mechanism. The Schiff-base intermediate with substrate role is filled by K170. 3-dehydroquinate contacts are provided by R213, S232, and Q236.

This sequence belongs to the type-I 3-dehydroquinase family. As to quaternary structure, homodimer.

The enzyme catalyses 3-dehydroquinate = 3-dehydroshikimate + H2O. It functions in the pathway metabolic intermediate biosynthesis; chorismate biosynthesis; chorismate from D-erythrose 4-phosphate and phosphoenolpyruvate: step 3/7. Functionally, involved in the third step of the chorismate pathway, which leads to the biosynthesis of aromatic amino acids. Catalyzes the cis-dehydration of 3-dehydroquinate (DHQ) and introduces the first double bond of the aromatic ring to yield 3-dehydroshikimate. The protein is 3-dehydroquinate dehydratase of Salmonella choleraesuis (strain SC-B67).